We begin with the raw amino-acid sequence, 484 residues long: PTS system N-acetylmuramic acid-specific EIIBC component (484 aa).

The PTS EIIB type-1 domain maps to Met-1–Gly-89. Cys-28 serves as the catalytic Phosphocysteine intermediate; for EIIB activity. The PTS EIIC type-1 domain occupies Ser-125–Ser-484. Transmembrane regions (helical) follow at residues Phe-127–Phe-147, Leu-168–Gly-188, Ala-194–Asn-214, Phe-228–Ile-248, Met-266–Met-286, Ala-310–Val-330, Leu-345–Phe-365, Gly-379–Pro-399, Ile-409–Gly-429, and Ile-451–Leu-471.

The protein resides in the cell inner membrane. It carries out the reaction N-acetyl-beta-D-muramate(out) + N(pros)-phospho-L-histidyl-[protein] = N-acetyl-beta-D-muramate 6-phosphate(in) + L-histidyl-[protein]. Its function is as follows. The phosphoenolpyruvate-dependent sugar phosphotransferase system (sugar PTS), a major carbohydrate active transport system, catalyzes the phosphorylation of incoming sugar substrates concomitantly with their translocation across the cell membrane. This system is involved in N-acetylmuramic acid (MurNAc) transport, yielding cytoplasmic MurNAc-6-P. Is also able to take up anhydro-N-acetylmuramic acid (anhMurNAc), but cannot phosphorylate the carbon 6, probably because of the 1,6-anhydro ring. This is PTS system N-acetylmuramic acid-specific EIIBC component (murP) from Vibrio parahaemolyticus serotype O3:K6 (strain RIMD 2210633).